A 638-amino-acid polypeptide reads, in one-letter code: Threonine--tRNA ligase (638 aa).

Residues Met1 to Thr63 enclose the TGS domain. The catalytic stretch occupies residues Asp245–Pro536. Cys337, His388, and His513 together coordinate Zn(2+).

It belongs to the class-II aminoacyl-tRNA synthetase family. As to quaternary structure, homodimer. It depends on Zn(2+) as a cofactor.

Its subcellular location is the cytoplasm. The catalysed reaction is tRNA(Thr) + L-threonine + ATP = L-threonyl-tRNA(Thr) + AMP + diphosphate + H(+). Its function is as follows. Catalyzes the attachment of threonine to tRNA(Thr) in a two-step reaction: L-threonine is first activated by ATP to form Thr-AMP and then transferred to the acceptor end of tRNA(Thr). Also edits incorrectly charged L-seryl-tRNA(Thr). The chain is Threonine--tRNA ligase from Syntrophotalea carbinolica (strain DSM 2380 / NBRC 103641 / GraBd1) (Pelobacter carbinolicus).